The chain runs to 457 residues: MDKLNKITVPASQKLRQLQKMVHDIKNNEGGIMDKIKKLKVKGPPSVPRRDYALDNPADEEEQWSDDFDSDYENPDEHSDSEMYVMPAEETGDDSYEPPPAEQQTRVVHPALPFTRGEYVDNRSSQRHSPPFSKTLPSKPSWPSAKARLASTLPAPNSLQKPQVPPKPKDLLEDEADYVVPVEDNDENYIHPRESSPLPAEKAPTVNRSTKPNSSSKHVSPPGTVAGRNSGVWDSKSSLPAAPSPLPRAGKKTATPLKTTPVPSLQNASNVCEEKPVPAERHRGSSHRQDTVQSPVFPPTQKPVLQKPVPLPRFTEGGSPAADGPVPSFPFNSTFADQEAELHGKPWYAGACDRKSAEEALHRSNKDGSFLIRKSSGHDSKQPYTLVAFFNKRVYNIPVRFIEATKQYALGKKKNGEEYFGSVVEIIKNHQHNPLVLIDSQNNTKDSTRLKYAVKVS.

The tract at residues lysine 38–glutamine 306 is disordered. Residues proline 57–asparagine 74 show a composition bias toward acidic residues. A phosphotyrosine; by SYK mark is found at tyrosine 72, tyrosine 84, tyrosine 96, tyrosine 178, and tyrosine 189. Residues leucine 172 to glutamate 187 show a composition bias toward acidic residues. Polar residues-rich tracts occupy residues valine 206–histidine 218 and proline 256–asparagine 270. Residues cysteine 272–aspartate 290 are compositionally biased toward basic and acidic residues. Positions tryptophan 347–valine 454 constitute an SH2 domain.

Associates with PLCG1, VAV1 and NCK1 in a B-cell antigen receptor-dependent fashion. Interacts with VAV3, PLCG2 and GRB2. Interacts through its SH2 domain with CD79A. Interacts (via SH2 domain) with SYK; phosphorylated and activated by SYK. Interacts (via SH2 domain) with SCIMP; this interaction is dependent on phosphorylation of SCIMP 'Tyr-120'. Post-translationally, following BCR activation, phosphorylated on tyrosine residues by SYK and LYN. When phosphorylated, serves as a scaffold to assemble downstream targets of antigen activation, including PLCG1, VAV1, GRB2 and NCK1. Phosphorylation of Tyr-84, Tyr-178 and Tyr-189 facilitates PLCG1 binding. Phosphorylation of Tyr-96 facilitates BTK binding. Phosphorylation of Tyr-72 facilitates VAV1 and NCK1 binding. Phosphorylation is required for both Ca(2+) and MAPK signaling pathways.

It localises to the cytoplasm. Its subcellular location is the cell membrane. Functions as a central linker protein, downstream of the B-cell receptor (BCR), bridging the SYK kinase to a multitude of signaling pathways and regulating biological outcomes of B-cell function and development. Plays a role in the activation of ERK/EPHB2, MAP kinase p38 and JNK. Modulates AP1 activation. Important for the activation of NF-kappa-B and NFAT. Plays an important role in BCR-mediated PLCG1 and PLCG2 activation and Ca(2+) mobilization and is required for trafficking of the BCR to late endosomes. However, does not seem to be required for pre-BCR-mediated activation of MAP kinase and phosphatidyl-inositol 3 (PI3) kinase signaling. May be required for the RAC1-JNK pathway. Plays a critical role in orchestrating the pro-B cell to pre-B cell transition. May play an important role in BCR-induced B-cell apoptosis. In Rattus norvegicus (Rat), this protein is B-cell linker protein (Blnk).